Reading from the N-terminus, the 323-residue chain is Lipid A biosynthesis acyltransferase 1 (323 aa).

The chain crosses the membrane as a helical span at residues 23-43 (YWGAWLGVAAMAGIALTPPKF). The HXXXXD motif signature appears at 139–144 (HGWAVD).

This sequence belongs to the LpxL/LpxM/LpxP family. LpxM subfamily.

It localises to the cell inner membrane. The catalysed reaction is an alpha-Kdo-(2-&gt;4)-alpha-Kdo-(2-&gt;6)-(acyl)-lipid IVA + a fatty acyl-[ACP] = an alpha-Kdo-(2-&gt;4)-alpha-Kdo-(2-&gt;6)-lipid A + holo-[ACP]. It participates in glycolipid biosynthesis; KDO(2)-lipid A biosynthesis; KDO(2)-lipid A from CMP-3-deoxy-D-manno-octulosonate and lipid IV(A): step 4/4. It functions in the pathway bacterial outer membrane biogenesis; lipopolysaccharide biosynthesis. Catalyzes the transfer of an acyl chain from an acyl-[acyl-carrier-protein] (ACP) to a Kdo(2)-(acyl)-lipid IV(A) to form a Kdo(2)-lipid A. This chain is Lipid A biosynthesis acyltransferase 1, found in Shigella flexneri.